Consider the following 380-residue polypeptide: 4-hydroxy-3-methylbut-2-en-1-yl diphosphate synthase (flavodoxin) (380 aa).

Residues Cys-280, Cys-283, Cys-315, and Glu-322 each coordinate [4Fe-4S] cluster.

The protein belongs to the IspG family. The cofactor is [4Fe-4S] cluster.

The catalysed reaction is (2E)-4-hydroxy-3-methylbut-2-enyl diphosphate + oxidized [flavodoxin] + H2O + 2 H(+) = 2-C-methyl-D-erythritol 2,4-cyclic diphosphate + reduced [flavodoxin]. The protein operates within isoprenoid biosynthesis; isopentenyl diphosphate biosynthesis via DXP pathway; isopentenyl diphosphate from 1-deoxy-D-xylulose 5-phosphate: step 5/6. Its function is as follows. Converts 2C-methyl-D-erythritol 2,4-cyclodiphosphate (ME-2,4cPP) into 1-hydroxy-2-methyl-2-(E)-butenyl 4-diphosphate. The sequence is that of 4-hydroxy-3-methylbut-2-en-1-yl diphosphate synthase (flavodoxin) from Cutibacterium acnes (strain DSM 16379 / KPA171202) (Propionibacterium acnes).